The following is a 154-amino-acid chain: Large ribosomal subunit protein uL30 (154 aa).

Residues 122–141 (RGGHDGIKTPASDGGQLGKH) are disordered.

Belongs to the universal ribosomal protein uL30 family. As to quaternary structure, part of the 50S ribosomal subunit.

In Halobacterium salinarum (strain ATCC 29341 / DSM 671 / R1), this protein is Large ribosomal subunit protein uL30.